The following is a 328-amino-acid chain: Protein-glutamine deamidase Cif (328 aa).

The disordered stretch occupies residues 1 to 68 (MLEHGVMKIP…TNRTGENPMI (68 aa)). The segment covering 52 to 63 (RSSSISNTNRTG) has biased composition (polar residues). Catalysis depends on residues C156, H211, and Q231.

The protein belongs to the Cif family.

Its subcellular location is the secreted. It localises to the host nucleus. It carries out the reaction L-glutaminyl-[protein] + H2O = L-glutamyl-[protein] + NH4(+). Its function is as follows. Protein-glutamine deamidase effector that inhibits the host cell cycle and other key cellular processes such as the actin network and programmed-cell death. Acts by mediating the side chain deamidation of 'Gln-40' of host NEDD8, converting it to glutamate, thereby abolishing the activity of cullin-RING-based E3 ubiquitin-protein ligase complexes (CRL complexes). Inactivation of CRL complexes prevents ubiquitination and subsequent degradation of the cyclin-dependent kinase inhibitors CDKN1A/p21 and CDKN1B/p27, leading to G1 and G2 cell cycle arrests in host cells. Deamidation of 'Gln-40' of host NEDD8 also triggers macrophage-specific programmed cell death. Also able to catalyze deamidation of 'Gln-40' of host ubiquitin in vitro; however, NEDD8 constitutes the preferred substrate in vivo. Also regulates the host NF-kappa-B signaling via activation of MAPK/ERK cascade: activation of host MAPK/ERK cascade is independent of CRL complexes inhibition, suggesting that Cif has other host protein targets than NEDD8. This chain is Protein-glutamine deamidase Cif, found in Burkholderia pseudomallei (strain K96243).